The primary structure comprises 259 residues: Cytosolic Fe-S cluster assembly factor Nubp2 homolog (259 aa).

14-21 (GKGGVGKS) serves as a coordination point for ATP. Residues Cys188 and Cys191 each contribute to the [4Fe-4S] cluster site.

Belongs to the Mrp/NBP35 ATP-binding proteins family. NUBP2/CFD1 subfamily. In terms of assembly, heterotetramer of 2 Nubp1 and 2 Nubp2 chains. [4Fe-4S] cluster is required as a cofactor.

The protein resides in the cytoplasm. In terms of biological role, component of the cytosolic iron-sulfur (Fe/S) protein assembly (CIA) machinery. Required for maturation of extramitochondrial Fe-S proteins. The Nubp1-Nubp2 heterotetramer forms a Fe-S scaffold complex, mediating the de novo assembly of an Fe-S cluster and its transfer to target apoproteins. This chain is Cytosolic Fe-S cluster assembly factor Nubp2 homolog, found in Anopheles gambiae (African malaria mosquito).